The following is a 79-amino-acid chain: WAP four-disulfide core domain protein 10A (79 aa).

A signal peptide spans 1-21 (MAPQTLLPVLVLCVLLLQAQG). In terms of domain architecture, WAP spans 34 to 79 (LSPEIKVCQQQPKLYLCKHLCESHRDCQANNICCSTYCGNVCMSIL). 4 disulfides stabilise this stretch: Cys-41-Cys-67, Cys-50-Cys-71, Cys-54-Cys-66, and Cys-60-Cys-75.

Its subcellular location is the secreted. This chain is WAP four-disulfide core domain protein 10A (WFDC10A), found in Homo sapiens (Human).